The following is a 461-amino-acid chain: Putative transcription initiation factor IIB-like protein (461 aa).

A disordered region spans residues 113-142 (SESLENIQSENSENNDNFTDNNTKKSPTKS). The segment covering 121–137 (SENSENNDNFTDNNTKK) has biased composition (low complexity). The segment at 141-173 (KSRICSGCGSKGTLLEDQSSSVLVCSECGMIND) adopts a TFIIB-type zinc-finger fold. The Zn(2+) site is built by Cys145, Cys165, and Cys168. A run of 2 repeats spans residues 246–327 (ISTI…EKKV) and 360–430 (IRRH…DVTI).

Belongs to the TFIIB family.

In Acanthamoeba polyphaga mimivirus (APMV), this protein is Putative transcription initiation factor IIB-like protein.